The following is a 104-amino-acid chain: L-rhamnose mutarotase (104 aa).

Tyr-18 provides a ligand contact to substrate. Residue His-22 is the Proton donor of the active site. Residues Tyr-41 and 76–77 (WW) each bind substrate.

This sequence belongs to the rhamnose mutarotase family. As to quaternary structure, homodimer.

Its subcellular location is the cytoplasm. It catalyses the reaction alpha-L-rhamnose = beta-L-rhamnose. The protein operates within carbohydrate metabolism; L-rhamnose metabolism. Its function is as follows. Involved in the anomeric conversion of L-rhamnose. The chain is L-rhamnose mutarotase from Klebsiella pneumoniae subsp. pneumoniae (strain ATCC 700721 / MGH 78578).